A 439-amino-acid chain; its full sequence is 3-phosphoshikimate 1-carboxyvinyltransferase (439 aa).

Residues lysine 31, serine 32, and arginine 36 each contribute to the 3-phosphoshikimate site. Lysine 31 provides a ligand contact to phosphoenolpyruvate. Phosphoenolpyruvate is bound by residues glycine 103 and arginine 131. 3-phosphoshikimate is bound by residues serine 175, glutamine 177, aspartate 322, and lysine 349. Phosphoenolpyruvate is bound at residue glutamine 177. Aspartate 322 serves as the catalytic Proton acceptor. Residues arginine 353 and arginine 397 each coordinate phosphoenolpyruvate.

It belongs to the EPSP synthase family. Monomer.

The protein localises to the cytoplasm. The catalysed reaction is 3-phosphoshikimate + phosphoenolpyruvate = 5-O-(1-carboxyvinyl)-3-phosphoshikimate + phosphate. It functions in the pathway metabolic intermediate biosynthesis; chorismate biosynthesis; chorismate from D-erythrose 4-phosphate and phosphoenolpyruvate: step 6/7. Catalyzes the transfer of the enolpyruvyl moiety of phosphoenolpyruvate (PEP) to the 5-hydroxyl of shikimate-3-phosphate (S3P) to produce enolpyruvyl shikimate-3-phosphate and inorganic phosphate. The polypeptide is 3-phosphoshikimate 1-carboxyvinyltransferase (Clostridium tetani (strain Massachusetts / E88)).